The following is a 441-amino-acid chain: Tol-Pal system protein TolB (441 aa).

Positions 1–39 (MPAMTPAFRRADLTGFLRTYGAALILLLAAMLAWQPAQA) are cleaved as a signal peptide.

The protein belongs to the TolB family. The Tol-Pal system is composed of five core proteins: the inner membrane proteins TolA, TolQ and TolR, the periplasmic protein TolB and the outer membrane protein Pal. They form a network linking the inner and outer membranes and the peptidoglycan layer.

The protein resides in the periplasm. Its function is as follows. Part of the Tol-Pal system, which plays a role in outer membrane invagination during cell division and is important for maintaining outer membrane integrity. In Bordetella bronchiseptica (strain ATCC BAA-588 / NCTC 13252 / RB50) (Alcaligenes bronchisepticus), this protein is Tol-Pal system protein TolB.